The sequence spans 281 residues: Lectin (281 aa).

The first 26 residues, 1-26 (MATYKLCSVLALSLTLFLLILNKVNS), serve as a signal peptide directing secretion. N-linked (GlcNAc...) asparagine glycosylation is found at N43 and N139. Residues 269–281 (AVIPTSNHNTFAI) constitute a propeptide that is removed on maturation.

Belongs to the leguminous lectin family. As to quaternary structure, homodimer. A minor C-terminal proteolytic processing site is observed at position 268.

Galactose and N-acetyllactosamine specific lectin. Binds to the H-2 blood type determinant fucosyl-N-acetyllactosamine. The chain is Lectin from Erythrina corallodendron (Coral tree).